We begin with the raw amino-acid sequence, 314 residues long: Acetaldehyde dehydrogenase 1 (314 aa).

16 to 19 contacts NAD(+); the sequence is SGNI. Cys134 serves as the catalytic Acyl-thioester intermediate. Residues 165-173 and Asn292 each bind NAD(+); that span reads SAGPGTRAN.

It belongs to the acetaldehyde dehydrogenase family.

It catalyses the reaction acetaldehyde + NAD(+) + CoA = acetyl-CoA + NADH + H(+). This chain is Acetaldehyde dehydrogenase 1 (mhpF), found in Cupriavidus necator (strain ATCC 17699 / DSM 428 / KCTC 22496 / NCIMB 10442 / H16 / Stanier 337) (Ralstonia eutropha).